The sequence spans 91 residues: Probable Fe(2+)-trafficking protein (91 aa).

It belongs to the Fe(2+)-trafficking protein family.

Functionally, could be a mediator in iron transactions between iron acquisition and iron-requiring processes, such as synthesis and/or repair of Fe-S clusters in biosynthetic enzymes. The chain is Probable Fe(2+)-trafficking protein from Xanthomonas euvesicatoria pv. vesicatoria (strain 85-10) (Xanthomonas campestris pv. vesicatoria).